We begin with the raw amino-acid sequence, 324 residues long: MGDTIKELLNPTVLSALLMGFAFSMVLGPIFIPMLHKLKFGQNIRKDGPQSHLKKSGTPTMGGLIFFISVTVTMLIIGYKPTDEGMVVLYSLIAFGIIGFLDDILKIIHRDNLGLRAYQKMILLLLFSIALAYYGYTNIGTDIIIPFMNSKLNLGIFYIPLVVVYYAATTNAVNLTDGIDGLASSVTVIVLTFFAIVGFKTGHYQVGVFSIALAGALLGFLRYNAFPAKIFMGDTGSLALGGAIATIALILKMPLFIIIVGGIYVVETLSVIIQVTSFKTTGKRVFKMAPIHHHFEQCGWSEVKLVTVFSIITLILCIIGFIAL.

9 consecutive transmembrane segments (helical) span residues V13–P33, P59–Y79, G85–L105, M121–T141, I143–V163, I179–F199, T201–L221, A243–I263, and V303–A323.

The protein belongs to the glycosyltransferase 4 family. MraY subfamily. It depends on Mg(2+) as a cofactor.

It localises to the cell membrane. The catalysed reaction is UDP-N-acetyl-alpha-D-muramoyl-L-alanyl-gamma-D-glutamyl-meso-2,6-diaminopimeloyl-D-alanyl-D-alanine + di-trans,octa-cis-undecaprenyl phosphate = di-trans,octa-cis-undecaprenyl diphospho-N-acetyl-alpha-D-muramoyl-L-alanyl-D-glutamyl-meso-2,6-diaminopimeloyl-D-alanyl-D-alanine + UMP. The protein operates within cell wall biogenesis; peptidoglycan biosynthesis. In terms of biological role, catalyzes the initial step of the lipid cycle reactions in the biosynthesis of the cell wall peptidoglycan: transfers peptidoglycan precursor phospho-MurNAc-pentapeptide from UDP-MurNAc-pentapeptide onto the lipid carrier undecaprenyl phosphate, yielding undecaprenyl-pyrophosphoryl-MurNAc-pentapeptide, known as lipid I. This is Phospho-N-acetylmuramoyl-pentapeptide-transferase from Clostridium botulinum (strain Alaska E43 / Type E3).